A 125-amino-acid polypeptide reads, in one-letter code: Succinate dehydrogenase assembly factor 3, mitochondrial (125 aa).

Residues 1–42 (MRTTNHLYRTVHRQGKPLLPPLHLYRRILRAHRTFPPAQRAL) constitute a mitochondrion transit peptide.

It belongs to the complex I LYR family. SDHAF3 subfamily. In terms of assembly, interacts with the iron-sulfur protein subunit within the SDH catalytic dimer.

The protein localises to the mitochondrion matrix. In terms of biological role, plays an essential role in the assembly of succinate dehydrogenase (SDH), an enzyme complex (also referred to as respiratory complex II) that is a component of both the tricarboxylic acid (TCA) cycle and the mitochondrial electron transport chain, and which couples the oxidation of succinate to fumarate with the reduction of ubiquinone (coenzyme Q) to ubiquinol. Promotes maturation of the iron-sulfur protein subunit of the SDH catalytic dimer, protecting it from the deleterious effects of oxidants. May act together with SDHAF1. In Eremothecium gossypii (strain ATCC 10895 / CBS 109.51 / FGSC 9923 / NRRL Y-1056) (Yeast), this protein is Succinate dehydrogenase assembly factor 3, mitochondrial.